Consider the following 92-residue polypeptide: UPF0223 protein SMU_1141c (92 aa).

The protein belongs to the UPF0223 family.

This Streptococcus mutans serotype c (strain ATCC 700610 / UA159) protein is UPF0223 protein SMU_1141c.